The following is a 351-amino-acid chain: C(7)-cyclitol 7-kinase (351 aa).

It belongs to the ROK (NagC/XylR) family.

The enzyme catalyses valienone + ATP = valienone 7-phosphate + ADP + H(+). It catalyses the reaction validone + ATP = validone 7-phosphate + ADP + H(+). Its function is as follows. Involved in the biosynthesis of the antifungal agent validamycin A. Catalyzes the phosphorylation of valienone and validone to their 7-phosphate derivatives. The protein is C(7)-cyclitol 7-kinase of Streptomyces hygroscopicus subsp. jinggangensis (strain 5008).